We begin with the raw amino-acid sequence, 317 residues long: ADP-L-glycero-D-manno-heptose-6-epimerase (317 aa).

NADP(+)-binding positions include 10-11 (FI), 31-32 (DD), Lys-38, Lys-53, 75-79 (QGACS), and Asn-92. Residue Tyr-139 is the Proton acceptor of the active site. Lys-143 provides a ligand contact to NADP(+). Asn-166 contributes to the substrate binding site. 2 residues coordinate NADP(+): Val-167 and Lys-175. Residue Lys-175 is the Proton acceptor of the active site. Substrate contacts are provided by residues Gly-177, His-184, 198–201 (FEGV), Arg-211, and Tyr-275.

This sequence belongs to the NAD(P)-dependent epimerase/dehydratase family. HldD subfamily. As to quaternary structure, homopentamer. The cofactor is NADP(+).

The catalysed reaction is ADP-D-glycero-beta-D-manno-heptose = ADP-L-glycero-beta-D-manno-heptose. The protein operates within nucleotide-sugar biosynthesis; ADP-L-glycero-beta-D-manno-heptose biosynthesis; ADP-L-glycero-beta-D-manno-heptose from D-glycero-beta-D-manno-heptose 7-phosphate: step 4/4. Its function is as follows. Catalyzes the interconversion between ADP-D-glycero-beta-D-manno-heptose and ADP-L-glycero-beta-D-manno-heptose via an epimerization at carbon 6 of the heptose. The sequence is that of ADP-L-glycero-D-manno-heptose-6-epimerase from Shewanella piezotolerans (strain WP3 / JCM 13877).